Reading from the N-terminus, the 83-residue chain is Small ribosomal subunit protein bS20 (83 aa).

The protein belongs to the bacterial ribosomal protein bS20 family.

Its function is as follows. Binds directly to 16S ribosomal RNA. The sequence is that of Small ribosomal subunit protein bS20 from Staphylococcus aureus (strain JH1).